Here is a 314-residue protein sequence, read N- to C-terminus: Lipoyl synthase (314 aa).

The [4Fe-4S] cluster site is built by C61, C66, C72, C87, C91, C94, and S301. The Radical SAM core domain occupies 73–290 (FGRGTATFMI…ERIATNLGFS (218 aa)).

It belongs to the radical SAM superfamily. Lipoyl synthase family. The cofactor is [4Fe-4S] cluster.

It is found in the cytoplasm. It carries out the reaction [[Fe-S] cluster scaffold protein carrying a second [4Fe-4S](2+) cluster] + N(6)-octanoyl-L-lysyl-[protein] + 2 oxidized [2Fe-2S]-[ferredoxin] + 2 S-adenosyl-L-methionine + 4 H(+) = [[Fe-S] cluster scaffold protein] + N(6)-[(R)-dihydrolipoyl]-L-lysyl-[protein] + 4 Fe(3+) + 2 hydrogen sulfide + 2 5'-deoxyadenosine + 2 L-methionine + 2 reduced [2Fe-2S]-[ferredoxin]. Its pathway is protein modification; protein lipoylation via endogenous pathway; protein N(6)-(lipoyl)lysine from octanoyl-[acyl-carrier-protein]: step 2/2. In terms of biological role, catalyzes the radical-mediated insertion of two sulfur atoms into the C-6 and C-8 positions of the octanoyl moiety bound to the lipoyl domains of lipoate-dependent enzymes, thereby converting the octanoylated domains into lipoylated derivatives. The polypeptide is Lipoyl synthase (Nitrosomonas eutropha (strain DSM 101675 / C91 / Nm57)).